Reading from the N-terminus, the 369-residue chain is 3-dehydroquinate synthase (369 aa).

NAD(+)-binding positions include 72 to 77 (SGEKEK), 130 to 131 (TT), K142, and K151. Zn(2+) contacts are provided by E184, H247, and H264.

This sequence belongs to the sugar phosphate cyclases superfamily. Dehydroquinate synthase family. The cofactor is Co(2+). Zn(2+) is required as a cofactor. It depends on NAD(+) as a cofactor.

The protein resides in the cytoplasm. The enzyme catalyses 7-phospho-2-dehydro-3-deoxy-D-arabino-heptonate = 3-dehydroquinate + phosphate. It participates in metabolic intermediate biosynthesis; chorismate biosynthesis; chorismate from D-erythrose 4-phosphate and phosphoenolpyruvate: step 2/7. Catalyzes the conversion of 3-deoxy-D-arabino-heptulosonate 7-phosphate (DAHP) to dehydroquinate (DHQ). In Bacillus cytotoxicus (strain DSM 22905 / CIP 110041 / 391-98 / NVH 391-98), this protein is 3-dehydroquinate synthase.